The sequence spans 296 residues: uncharacterized protein (296 aa).

6 helical membrane passes run 10–29 (FSTL…FSLL), 36–58 (YIVL…YYIL), 112–131 (FFAL…MFVT), 188–210 (ILIF…LYLR), 241–260 (MMYG…SAYF), and 273–295 (MYIS…VTYI).

It localises to the cell membrane. This is an uncharacterized protein from Clostridium acetobutylicum (strain ATCC 824 / DSM 792 / JCM 1419 / IAM 19013 / LMG 5710 / NBRC 13948 / NRRL B-527 / VKM B-1787 / 2291 / W).